Consider the following 119-residue polypeptide: Ribosome-binding factor A (119 aa).

Belongs to the RbfA family. As to quaternary structure, monomer. Binds 30S ribosomal subunits, but not 50S ribosomal subunits or 70S ribosomes.

It localises to the cytoplasm. One of several proteins that assist in the late maturation steps of the functional core of the 30S ribosomal subunit. Associates with free 30S ribosomal subunits (but not with 30S subunits that are part of 70S ribosomes or polysomes). Required for efficient processing of 16S rRNA. May interact with the 5'-terminal helix region of 16S rRNA. This Pelodictyon phaeoclathratiforme (strain DSM 5477 / BU-1) protein is Ribosome-binding factor A.